A 73-amino-acid polypeptide reads, in one-letter code: Conotoxin Im14.3 (73 aa).

Residues 1–17 (MGVFRCCLAAALVVVCL) form the signal peptide. Positions 18 to 35 (SRMGGTEPLESNHEDERR) are excised as a propeptide. Positions 22–42 (GTEPLESNHEDERRADDTSGD) are disordered. Residues 27-38 (ESNHEDERRADD) show a composition bias toward basic and acidic residues. In terms of domain architecture, ShKT spans 44–73 (CVDTNEDCVNWASTGQCEANPSYMRENCRK).

In terms of processing, contain 2 disulfide bonds. Expressed by the venom duct.

The protein localises to the secreted. In terms of biological role, probable neurotoxin. The sequence is that of Conotoxin Im14.3 from Conus imperialis (Imperial cone).